A 305-amino-acid chain; its full sequence is Dermonecrotic toxin LrSicTox-alphaIA1ii (305 aa).

The first 18 residues, 1-18, serve as a signal peptide directing secretion; that stretch reads MLLYVTLILGCWSAFSES. A propeptide spanning residues 19 to 26 is cleaved from the precursor; sequence AETDVAER. The active site involves His-37. The Mg(2+) site is built by Glu-57 and Asp-59. His-73 serves as the catalytic Nucleophile. 2 cysteine pairs are disulfide-bonded: Cys-77-Cys-83 and Cys-79-Cys-222. Asp-117 lines the Mg(2+) pocket. Residue Asn-282 is glycosylated (N-linked (GlcNAc...) asparagine).

Belongs to the arthropod phospholipase D family. Class II subfamily. Class IIa sub-subfamily. Mg(2+) serves as cofactor. Expressed by the venom gland.

It is found in the secreted. The catalysed reaction is an N-(acyl)-sphingosylphosphocholine = an N-(acyl)-sphingosyl-1,3-cyclic phosphate + choline. It catalyses the reaction an N-(acyl)-sphingosylphosphoethanolamine = an N-(acyl)-sphingosyl-1,3-cyclic phosphate + ethanolamine. The enzyme catalyses a 1-acyl-sn-glycero-3-phosphocholine = a 1-acyl-sn-glycero-2,3-cyclic phosphate + choline. It carries out the reaction a 1-acyl-sn-glycero-3-phosphoethanolamine = a 1-acyl-sn-glycero-2,3-cyclic phosphate + ethanolamine. Inhibited with low affinity by edelfosine. Dermonecrotic toxins cleave the phosphodiester linkage between the phosphate and headgroup of certain phospholipids (sphingolipid and lysolipid substrates), forming an alcohol (often choline) and a cyclic phosphate. This toxin acts on sphingomyelin (SM). It also acts on a broad range of lysophospholipids, like lysophosphatidylinositol (LPI), lysophosphatidylglycerol (LPG), lysophosphatidylethanolamine (LPE), lysobisphosphatidic acid (LBPA), lysophosphatidylserine (LPS) and lysophosphatidylcholines (LPC) of varying chain lengths. The substrate preference is LPI &gt; LPG &gt; LPS &gt; LPC &gt;&gt; LPE, LBPA. Furthermore, the enzyme also act on cyclic phosphatidic acid and lyso-platelet activating factor (LPAF, an alkyl-LPC). The enzyme does not act on sphingosylphosphorylcholine (SPC, also known as lyso-sphingomyelin) and PAF. The toxin may also act on ceramide phosphoethanolamine (CPE). It acts by transphosphatidylation, releasing exclusively cyclic phosphate products as second products. It does not exhibit detectable PLA1/2 activity. It induces dose-dependent hemolysis and dermonecrosis. Also induces increased vascular permeability, edema, inflammatory response, and platelet aggregation. The polypeptide is Dermonecrotic toxin LrSicTox-alphaIA1ii (Loxosceles reclusa (Brown recluse spider)).